We begin with the raw amino-acid sequence, 540 residues long: MSILRGSLRGVLAPNASVVFRSRLPPQLTSALLCPLRSLSGTPLAEPDGKVTRKMSENGTCNRILTLDSMNPCIQKVEYAVRGPIVIRAVELEKELQQGVKKPFTEVIKANIGDAHAMGQKPVTFLRQVSAICLYPELMNDNKFPEDVKQKAARILQACGGHSIGAYSASQGIEVIRQDVAKYIERRDGGILSDPNNIYLSTGASDSIVTMLKLLVSGQGKSRTGVMIPIPQYPLYSAALAELDAVQVNYYLDEENCWALDINELRRALAEARKHCDPKVLCIINPGNPTGQVQSRKCIEDVIRFAAEENLFLMADEVYQDNVYAKGCAFHSFKKVLFEMGPKYSETLELASFHSTSKGYMGECGFRGGYMEVINMDPAVKQQLTKLVSVRLCPPVPGQVLLDVIVNPPKPGEPSYKQFISEKQAVLNNLAEKARLTEEILNQAPGIRCNPVQGAMYSFPRIHIPEKAIKLAQAEGQAPDMFFCMKLLEETGICVVPGSGFGQREGTHHFRMTILPPTDKLKSLLERLKDFHQKFMDEYS.

An N6-(pyridoxal phosphate)lysine modification is found at Lys-358.

This sequence belongs to the class-I pyridoxal-phosphate-dependent aminotransferase family. Alanine aminotransferase subfamily. As to quaternary structure, homodimer. Requires pyridoxal 5'-phosphate as cofactor.

It catalyses the reaction L-alanine + 2-oxoglutarate = pyruvate + L-glutamate. The protein operates within amino-acid degradation; L-alanine degradation via transaminase pathway; pyruvate from L-alanine: step 1/1. In terms of biological role, catalyzes the reversible transamination between alanine and 2-oxoglutarate to form pyruvate and glutamate. This chain is Alanine aminotransferase 2 (gpt2), found in Xenopus laevis (African clawed frog).